The following is a 264-amino-acid chain: Small ribosomal subunit protein uS2 (264 aa).

The protein belongs to the universal ribosomal protein uS2 family.

The polypeptide is Small ribosomal subunit protein uS2 (Helicobacter pylori (strain P12)).